The primary structure comprises 91 residues: Kazal-type trypsin inhibitor (91 aa).

Residues 1-22 form the signal peptide; it reads MRHIGVFVGVLALALVLLVVEA. A Kazal-like domain is found at 25 to 78; that stretch reads DAERGVCACPRIYMPVCGSNLKTYNNDCLLRCEINSDLGRANNLRKIADQACDN. Cystine bridges form between Cys31-Cys56, Cys33-Cys52, and Cys41-Cys76. N-linked (GlcNAc...) asparagine glycosylation is present at Asn78.

As to quaternary structure, interacts with human PLG (plasmin). Female salivary gland. Female gut at 3 and 24 hours after blood feeding. Female carcass. Male tissues. Not detected in ovary and fat body at 3 and 24 hours after blood feeding.

The protein localises to the secreted. Anticoagulant protein that decreases host thrombin (F2) activity via an uncompetitive inhibition mechanism. Inhibits amidolytic activity of host plasmin (PLG). Inhibits amidolytic activity of host trypsin. Inhibits trypsin-like endogenous activity from gut of female mosquitoes 24 hours after feeding and weakly affects enzyme activity from gut 3 hours after feeding, suggesting a possible role as an inhibitor of endogenous proteases. In terms of biological role, (Microbial infection) Limits host plasmin-mediated enhancement of dengue virus type 2 infection in mosquito midgut. The protein is Kazal-type trypsin inhibitor of Aedes aegypti (Yellowfever mosquito).